Consider the following 66-residue polypeptide: SPbeta prophage-derived uncharacterized protein YopM (66 aa).

This Bacillus subtilis (strain 168) protein is SPbeta prophage-derived uncharacterized protein YopM (yopM).